A 201-amino-acid polypeptide reads, in one-letter code: 3-isopropylmalate dehydratase small subunit (201 aa).

The protein belongs to the LeuD family. LeuD type 1 subfamily. Heterodimer of LeuC and LeuD.

The catalysed reaction is (2R,3S)-3-isopropylmalate = (2S)-2-isopropylmalate. The protein operates within amino-acid biosynthesis; L-leucine biosynthesis; L-leucine from 3-methyl-2-oxobutanoate: step 2/4. Catalyzes the isomerization between 2-isopropylmalate and 3-isopropylmalate, via the formation of 2-isopropylmaleate. The chain is 3-isopropylmalate dehydratase small subunit from Shewanella sp. (strain MR-4).